Here is a 260-residue protein sequence, read N- to C-terminus: Acetylglutamate kinase (260 aa).

Substrate-binding positions include 46–47 (GG), Arg-68, and Asn-160.

Belongs to the acetylglutamate kinase family. ArgB subfamily.

The protein resides in the cytoplasm. It carries out the reaction N-acetyl-L-glutamate + ATP = N-acetyl-L-glutamyl 5-phosphate + ADP. It functions in the pathway amino-acid biosynthesis; L-arginine biosynthesis; N(2)-acetyl-L-ornithine from L-glutamate: step 2/4. In terms of biological role, catalyzes the ATP-dependent phosphorylation of N-acetyl-L-glutamate. This is Acetylglutamate kinase from Shewanella oneidensis (strain ATCC 700550 / JCM 31522 / CIP 106686 / LMG 19005 / NCIMB 14063 / MR-1).